Reading from the N-terminus, the 235-residue chain is Regulator of G-protein signaling 18 (235 aa).

A Phosphoserine modification is found at S49. One can recognise an RGS domain in the interval 86 to 202; it reads SFDKLLSHRD…LKSDIYLDLM (117 aa). A phosphoserine mark is found at S216 and S218.

As to expression, expressed in peripheral leukocytes, bone marrow, platelet, spleen and fetal liver.

The protein resides in the cytoplasm. Functionally, inhibits signal transduction by increasing the GTPase activity of G protein alpha subunits thereby driving them into their inactive GDP-bound form. Binds to G(i) alpha-1, G(i) alpha-2, G(i) alpha-3 and G(q) alpha. This Homo sapiens (Human) protein is Regulator of G-protein signaling 18 (RGS18).